Reading from the N-terminus, the 246-residue chain is UDP-N-acetyl-D-mannosaminuronic acid transferase (246 aa).

This sequence belongs to the glycosyltransferase 26 family.

The catalysed reaction is UDP-N-acetyl-alpha-D-mannosaminouronate + N-acetyl-alpha-D-glucosaminyl-di-trans,octa-cis-undecaprenyl diphosphate = beta-D-ManNAcA-(1-&gt;4)-alpha-D-GlcNAc-di-trans,octa-cis-undecaprenyl diphosphate + UDP + H(+). Its pathway is bacterial outer membrane biogenesis; enterobacterial common antigen biosynthesis. In terms of biological role, catalyzes the synthesis of Und-PP-GlcNAc-ManNAcA (Lipid II), the second lipid-linked intermediate involved in enterobacterial common antigen (ECA) synthesis. The polypeptide is UDP-N-acetyl-D-mannosaminuronic acid transferase (Shigella flexneri).